The following is a 468-amino-acid chain: PTS system mannitol-specific EIICB component (468 aa).

Residues 1–25 are Cytoplasmic-facing; sequence MNNQPSFRARVQKFGSFLSGMIMPN. Residues 14-344 enclose the PTS EIIC type-2 domain; the sequence is FGSFLSGMIM…ILKTSKATAE (331 aa). A helical membrane pass occupies residues 26 to 47; it reads IGAFIAWGLITALFIPTGWWPN. Topologically, residues 48–51 are extracellular; the sequence is EQLA. Residues 52–72 traverse the membrane as a helical segment; it reads ELVGPMITYLLPLLIGYTGGK. The Cytoplasmic segment spans residues 73 to 135; it reads MIYDVRGGVV…SGFEMLVNNF (63 aa). The helical transmembrane segment at 136 to 157 threads the bilayer; sequence SAGILAAILAIVAFLGIGPVVV. Residues 158–166 are Extracellular-facing; the sequence is SFSNVLASG. A helical transmembrane segment spans residues 167 to 187; sequence VEVIIGAGLLPLASIFIEPAK. Residues 188–274 lie on the Cytoplasmic side of the membrane; the sequence is VLFLNNAINH…ILMKPTLILA (87 aa). The chain crosses the membrane as a helical span at residues 275-294; sequence VIAGGMSGVFTFVLFNAGLV. Residues 295-314 lie on the Extracellular side of the membrane; that stretch reads AVPSPGSIFALLAMTPRGEY. The helical transmembrane segment at 315–336 threads the bilayer; the sequence is AGVLAGVIIATVVSFVIASIIL. Residues 337–468 are Cytoplasmic-facing; sequence KTSKATAEDL…YDELVNRLKS (132 aa). Positions 380–468 constitute a PTS EIIB type-2 domain; that stretch reads NKIIFACDAG…YDELVNRLKS (89 aa). Residue Cys-386 is the Phosphocysteine intermediate; for EIIB activity of the active site. Phosphocysteine; by EIIA is present on Cys-386.

Homodimer.

The protein resides in the cell membrane. It carries out the reaction D-mannitol(out) + N(pros)-phospho-L-histidyl-[protein] = D-mannitol 1-phosphate(in) + L-histidyl-[protein]. Its function is as follows. The phosphoenolpyruvate-dependent sugar phosphotransferase system (sugar PTS), a major carbohydrate active transport system, catalyzes the phosphorylation of incoming sugar substrates concomitantly with their translocation across the cell membrane. The enzyme II CmtAB PTS system is involved in D-mannitol transport. The sequence is that of PTS system mannitol-specific EIICB component (mtlA) from Halalkalibacterium halodurans (strain ATCC BAA-125 / DSM 18197 / FERM 7344 / JCM 9153 / C-125) (Bacillus halodurans).